The following is a 275-amino-acid chain: 3-methyl-2-oxobutanoate hydroxymethyltransferase (275 aa).

Residues D55 and D94 each contribute to the Mg(2+) site. Residues 55–56, D94, and K123 contribute to the 3-methyl-2-oxobutanoate site; that span reads DS. Mg(2+) is bound at residue E125. E192 functions as the Proton acceptor in the catalytic mechanism.

The protein belongs to the PanB family. Homodecamer; pentamer of dimers. Mg(2+) serves as cofactor.

It localises to the cytoplasm. The enzyme catalyses 3-methyl-2-oxobutanoate + (6R)-5,10-methylene-5,6,7,8-tetrahydrofolate + H2O = 2-dehydropantoate + (6S)-5,6,7,8-tetrahydrofolate. The protein operates within cofactor biosynthesis; (R)-pantothenate biosynthesis; (R)-pantoate from 3-methyl-2-oxobutanoate: step 1/2. In terms of biological role, catalyzes the reversible reaction in which hydroxymethyl group from 5,10-methylenetetrahydrofolate is transferred onto alpha-ketoisovalerate to form ketopantoate. The protein is 3-methyl-2-oxobutanoate hydroxymethyltransferase of Halorhodospira halophila (strain DSM 244 / SL1) (Ectothiorhodospira halophila (strain DSM 244 / SL1)).